We begin with the raw amino-acid sequence, 467 residues long: NALCN channel auxiliary factor 1 (467 aa).

The chain crosses the membrane as a helical span at residues leucine 40–alanine 60. Residues methionine 121 to arginine 161 form a disordered region. Asparagine 160, asparagine 226, and asparagine 254 each carry an N-linked (GlcNAc...) asparagine glycan. Intrachain disulfides connect cysteine 200-cysteine 270, cysteine 235-cysteine 322, cysteine 255-cysteine 270, cysteine 313-cysteine 350, cysteine 333-cysteine 386, cysteine 339-cysteine 385, and cysteine 343-cysteine 370. Basic and acidic residues predominate over residues serine 390–cysteine 408. Residues serine 390 to proline 409 are disordered. The chain crosses the membrane as a helical span at residues leucine 426–glutamine 446. N-linked (GlcNAc...) asparagine glycosylation occurs at asparagine 462.

The protein belongs to the NALF family. Component of the NALCN channel complex. NALCN complex consists of NALCN and auxiliary subunits, UNC79, UNC80 and NACL1. These auxiliary subunits are essential for the NALCN channel function.

Its subcellular location is the cell membrane. Its function is as follows. Auxillary component of the NALCN sodium channel complex, a channel that regulates the resting membrane potential and controls neuronal excitability. This chain is NALCN channel auxiliary factor 1, found in Mus musculus (Mouse).